Here is a 172-residue protein sequence, read N- to C-terminus: Adenine phosphoribosyltransferase (172 aa).

Belongs to the purine/pyrimidine phosphoribosyltransferase family. In terms of assembly, homodimer.

The protein resides in the cytoplasm. It carries out the reaction AMP + diphosphate = 5-phospho-alpha-D-ribose 1-diphosphate + adenine. It participates in purine metabolism; AMP biosynthesis via salvage pathway; AMP from adenine: step 1/1. Catalyzes a salvage reaction resulting in the formation of AMP, that is energically less costly than de novo synthesis. In Roseiflexus sp. (strain RS-1), this protein is Adenine phosphoribosyltransferase.